We begin with the raw amino-acid sequence, 356 residues long: Putative aminopeptidase FrvX (356 aa).

Residues His61 and Asp175 each coordinate a divalent metal cation. Glu205 functions as the Proton acceptor in the catalytic mechanism. 3 residues coordinate a divalent metal cation: Glu206, Asp228, and His316.

It belongs to the peptidase M42 family. A divalent metal cation serves as cofactor.

The chain is Putative aminopeptidase FrvX (frvX) from Escherichia coli (strain K12).